Here is a 316-residue protein sequence, read N- to C-terminus: IDS-like terpene synthase 2 (316 aa).

Mg(2+) contacts are provided by aspartate 69 and aspartate 73.

Belongs to the FPP/GGPP synthase family. The cofactor is Mg(2+).

It carries out the reaction (2E)-geranyl diphosphate + H2O = linalool + diphosphate. The enzyme catalyses (2E,6E)-farnesyl diphosphate + H2O = (6E)-nerolidol + diphosphate. Its function is as follows. Terpene synthase that shows monoterpene synthase activity and produces linalool, using geranyl diphosphate (GPP) as substrate. Also shows sesquiterpene synthase activity as it is able to convert farnesyl diphosphate (FPP) into (E)-nerolidol. This is IDS-like terpene synthase 2 from Melampsora larici-populina (strain 98AG31 / pathotype 3-4-7) (Poplar leaf rust fungus).